The chain runs to 332 residues: L-lactate dehydrogenase A chain (332 aa).

Lys5 is modified (N6-acetyllysine; alternate). Lys5 carries the N6-succinyllysine; alternate modification. At Lys14 the chain carries N6-acetyllysine. Thr18 bears the Phosphothreonine mark. 29–57 (GAVGMACAISILMKDLADELALVDVIEDK) provides a ligand contact to NAD(+). At Lys57 the chain carries N6-acetyllysine; alternate. A Glycyl lysine isopeptide (Lys-Gly) (interchain with G-Cter in SUMO2); alternate cross-link involves residue Lys57. At Lys81 the chain carries N6-acetyllysine. Residue Arg99 coordinates NAD(+). Arg106 lines the substrate pocket. Lys118 carries the post-translational modification N6-acetyllysine; alternate. Position 118 is an N6-succinyllysine; alternate (Lys118). Lys126 bears the N6-acetyllysine mark. Residue Asn138 coordinates NAD(+). 2 residues coordinate substrate: Asn138 and Arg169. The Proton acceptor role is filled by His193. The residue at position 232 (Lys232) is an N6-acetyllysine. Position 239 is a phosphotyrosine (Tyr239). Lys243 is modified (N6-acetyllysine). Residue Thr248 participates in substrate binding. Thr309 and Thr322 each carry phosphothreonine.

It belongs to the LDH/MDH superfamily. LDH family. Homotetramer. Interacts with PTEN upstream reading frame protein MP31. In terms of processing, ISGylated.

It is found in the cytoplasm. The enzyme catalyses (S)-lactate + NAD(+) = pyruvate + NADH + H(+). Its pathway is fermentation; pyruvate fermentation to lactate; (S)-lactate from pyruvate: step 1/1. In terms of biological role, interconverts simultaneously and stereospecifically pyruvate and lactate with concomitant interconversion of NADH and NAD(+). The sequence is that of L-lactate dehydrogenase A chain (LDHA) from Monodelphis domestica (Gray short-tailed opossum).